We begin with the raw amino-acid sequence, 316 residues long: E3 ubiquitin-protein ligase rnf146 (316 aa).

The RING-type zinc-finger motif lies at 36–74 (CAICLQTCVHPVSLPCKHIFCYLCVKGASWLGRRCALCR). Positions 91–167 (EELKSASRGN…EHGRRRKIKR (77 aa)) constitute a WWE domain. Residues Tyr107, Arg110, Trp114, Tyr144, Gln153, Arg163, and Lys175 each contribute to the a glycoprotein site. Positions 257 to 316 (GRNNIGEGEEGQPLINARMPAPSALLEESEPSDSNDHGSPTLQHNSLLVPQSNRLPFGNP) are disordered. The span at 293-310 (HGSPTLQHNSLLVPQSNR) shows a compositional bias: polar residues.

The protein resides in the cytoplasm. It is found in the cytosol. It localises to the nucleus. The enzyme catalyses S-ubiquitinyl-[E2 ubiquitin-conjugating enzyme]-L-cysteine + [acceptor protein]-L-lysine = [E2 ubiquitin-conjugating enzyme]-L-cysteine + N(6)-ubiquitinyl-[acceptor protein]-L-lysine.. It participates in protein modification; protein ubiquitination. In terms of biological role, E3 ubiquitin-protein ligase that specifically binds poly-ADP-ribosylated proteins and mediates their ubiquitination and subsequent degradation. May regulate many important biological processes, such as cell survival and DNA damage response. Acts as an activator of the Wnt signaling pathway by mediating the ubiquitination of poly-ADP-ribosylated proteins. Neuroprotective protein. Protects against cell death induced by DNA damaging agents and rescues cells from G1 arrest. Promotes cell survival after gamma-irradiation. Facilitates DNA repair. The sequence is that of E3 ubiquitin-protein ligase rnf146 (rnf146) from Xenopus tropicalis (Western clawed frog).